A 406-amino-acid polypeptide reads, in one-letter code: Phosphopentomutase (406 aa).

6 residues coordinate Mn(2+): D10, D305, H310, D346, H347, and H358.

It belongs to the phosphopentomutase family. The cofactor is Mn(2+).

It is found in the cytoplasm. The enzyme catalyses 2-deoxy-alpha-D-ribose 1-phosphate = 2-deoxy-D-ribose 5-phosphate. It carries out the reaction alpha-D-ribose 1-phosphate = D-ribose 5-phosphate. It functions in the pathway carbohydrate degradation; 2-deoxy-D-ribose 1-phosphate degradation; D-glyceraldehyde 3-phosphate and acetaldehyde from 2-deoxy-alpha-D-ribose 1-phosphate: step 1/2. In terms of biological role, isomerase that catalyzes the conversion of deoxy-ribose 1-phosphate (dRib-1-P) and ribose 1-phosphate (Rib-1-P) to deoxy-ribose 5-phosphate (dRib-5-P) and ribose 5-phosphate (Rib-5-P), respectively. This Allorhizobium ampelinum (strain ATCC BAA-846 / DSM 112012 / S4) (Agrobacterium vitis (strain S4)) protein is Phosphopentomutase.